The primary structure comprises 429 residues: MPNIVVVGTQWGDEGKGKIVDLLSGYADYVVRFQGGNNAGHTMVVDGNEIISHLVPSGIIQNKVCFIGNGVVVDPLVLLEEIDYLDSRGIDVSPERIKISDRAHMIMPYHKSIDQARELKKGDAKIGTTGRGIGPCYEDKATRRGIRFADLLDEALFAEKVTTIMEEKNFYLKNYFKTDTLDPGAVIKEFMGLRDRLLPYISDVSVALNKGMDQGKQVLFEGAQGTHLDIEHGTYPFVTSSSTVAANAACGSGVGPGKLDHVMGIVKAYTTRVGSGPFPTELFDEIGDRLQKKGAEFGATTGRRRRCGWLDMVMLKNAARLNGLTGLVITKLDVLDGLEEIKICTGYEHKGKVYDAFPPAIKTLEECTPVYESHPGWTENISKIKDYEDFPENTKKYLDRIKELSGVDIKIVSVGPGREATIVLDNLFC.

GTP-binding positions include 12-18 (GDEGKGK) and 40-42 (GHT). Catalysis depends on aspartate 13, which acts as the Proton acceptor. Mg(2+)-binding residues include aspartate 13 and glycine 40. Residues 13-16 (DEGK), 38-41 (NAGH), threonine 129, arginine 143, glutamine 224, threonine 239, and arginine 303 contribute to the IMP site. Histidine 41 (proton donor) is an active-site residue. Residue 299–305 (ATTGRRR) coordinates substrate. GTP-binding positions include arginine 305, 331–333 (KLD), and 413–415 (SVG).

The protein belongs to the adenylosuccinate synthetase family. In terms of assembly, homodimer. The cofactor is Mg(2+).

The protein localises to the cytoplasm. The catalysed reaction is IMP + L-aspartate + GTP = N(6)-(1,2-dicarboxyethyl)-AMP + GDP + phosphate + 2 H(+). It participates in purine metabolism; AMP biosynthesis via de novo pathway; AMP from IMP: step 1/2. Functionally, plays an important role in the de novo pathway of purine nucleotide biosynthesis. Catalyzes the first committed step in the biosynthesis of AMP from IMP. The sequence is that of Adenylosuccinate synthetase from Desulforapulum autotrophicum (strain ATCC 43914 / DSM 3382 / VKM B-1955 / HRM2) (Desulfobacterium autotrophicum).